The primary structure comprises 326 residues: GTP 3',8-cyclase (326 aa).

Positions 5 to 227 (GHGRTVDYLR…ALGREGASPS (223 aa)) constitute a Radical SAM core domain. Residue Arg14 participates in GTP binding. Cys21 and Cys25 together coordinate [4Fe-4S] cluster. Tyr27 serves as a coordination point for S-adenosyl-L-methionine. Cys28 lines the [4Fe-4S] cluster pocket. Position 64 (Arg64) interacts with GTP. Position 68 (Gly68) interacts with S-adenosyl-L-methionine. Position 95 (Thr95) interacts with GTP. An S-adenosyl-L-methionine-binding site is contributed by Ser119. Lys155 lines the GTP pocket. Met189 provides a ligand contact to S-adenosyl-L-methionine. [4Fe-4S] cluster is bound by residues Cys250 and Cys253. 255–257 (RIR) is a GTP binding site. Cys267 provides a ligand contact to [4Fe-4S] cluster.

The protein belongs to the radical SAM superfamily. MoaA family. In terms of assembly, monomer and homodimer. The cofactor is [4Fe-4S] cluster.

The enzyme catalyses GTP + AH2 + S-adenosyl-L-methionine = (8S)-3',8-cyclo-7,8-dihydroguanosine 5'-triphosphate + 5'-deoxyadenosine + L-methionine + A + H(+). Its pathway is cofactor biosynthesis; molybdopterin biosynthesis. Functionally, catalyzes the cyclization of GTP to (8S)-3',8-cyclo-7,8-dihydroguanosine 5'-triphosphate. The polypeptide is GTP 3',8-cyclase (Sulfurovum sp. (strain NBC37-1)).